The following is a 255-amino-acid chain: MAQGKNKRLSKGKKGIKKRVVDPFTKKDWYNIKAPSTFENRDVGKTLVNRSTGLRLANDYLKGRVLEVSLADLQGQEDHSFKKVKLRVDEVQGKNLLTNFHGFDFTSDKLRSLVRKWQTLIEANVTVKTSDDYFLRLFVIGFTKRQANQVKKTTYAQTSQINQIRKKMTDIVVREASNVTLAQLTAKLIPEVIGREIEKATQNIYPLQNVYIRKVKLLKQPKFDLGALLALHGGATDDNGKKVNREFKDVVLESV.

Alanine 2 is subject to N-acetylalanine; partial.

This sequence belongs to the eukaryotic ribosomal protein eS1 family. As to quaternary structure, component of the small ribosomal subunit. Mature ribosomes consist of a small (40S) and a large (60S) subunit. The 40S subunit contains about 33 different proteins and 1 molecule of RNA (18S). The 60S subunit contains about 49 different proteins and 3 molecules of RNA (25S, 5.8S and 5S).

It is found in the cytoplasm. This is Small ribosomal subunit protein eS1 from Yarrowia lipolytica (strain CLIB 122 / E 150) (Yeast).